The primary structure comprises 180 residues: Cytokinin-beta-glucosidase 3 (180 aa).

Hydrolyzes cytokinin glucosides thus liberating free cytokinins. This chain is Cytokinin-beta-glucosidase 3 (ROLC3), found in Panax ginseng (Korean ginseng).